The sequence spans 1118 residues: Phytochrome 1 (1118 aa).

Residues 1–10 (MSSTRHSYSS) are compositionally biased toward low complexity. The disordered stretch occupies residues 1-23 (MSSTRHSYSSGGSGKSKHGRRIA). A GAF domain is found at 212-391 (DIGLLCDSVV…VFSLQLNMEV (180 aa)). C317 is a binding site for phytochromobilin. PAS domains lie at 606 to 677 (VASE…LEGE) and 740 to 811 (DYKA…TKLM). Residues 887 to 1110 (YVKEELKKPL…LVTIQFPLAH (224 aa)) enclose the Histidine kinase domain.

This sequence belongs to the phytochrome family. As to quaternary structure, homodimer. Post-translationally, contains one covalently linked phytochromobilin chromophore.

In terms of biological role, regulatory photoreceptor which exists in two forms that are reversibly interconvertible by light: the Pr form that absorbs maximally in the red region of the spectrum and the Pfr form that absorbs maximally in the far-red region. Photoconversion of Pr to Pfr induces an array of morphogenic responses, whereas reconversion of Pfr to Pr cancels the induction of those responses. Pfr controls the expression of a number of nuclear genes including those encoding the small subunit of ribulose-bisphosphate carboxylase, chlorophyll A/B binding protein, protochlorophyllide reductase, rRNA, etc. It also controls the expression of its own gene(s) in a negative feedback fashion. The chain is Phytochrome 1 (PHY1) from Adiantum capillus-veneris (Maidenhair fern).